We begin with the raw amino-acid sequence, 133 residues long: S-adenosylmethionine decarboxylase proenzyme (133 aa).

Residue Ser64 is the Schiff-base intermediate with substrate; via pyruvic acid of the active site. Ser64 is modified (pyruvic acid (Ser); by autocatalysis). The active-site Proton acceptor; for processing activity is the His69. Cys84 (proton donor; for catalytic activity) is an active-site residue.

This sequence belongs to the prokaryotic AdoMetDC family. Type 1 subfamily. In terms of assembly, heterotetramer of two alpha and two beta chains arranged as a dimer of alpha/beta heterodimers. Pyruvate serves as cofactor. In terms of processing, is synthesized initially as an inactive proenzyme. Formation of the active enzyme involves a self-maturation process in which the active site pyruvoyl group is generated from an internal serine residue via an autocatalytic post-translational modification. Two non-identical subunits are generated from the proenzyme in this reaction, and the pyruvate is formed at the N-terminus of the alpha chain, which is derived from the carboxyl end of the proenzyme. The post-translation cleavage follows an unusual pathway, termed non-hydrolytic serinolysis, in which the side chain hydroxyl group of the serine supplies its oxygen atom to form the C-terminus of the beta chain, while the remainder of the serine residue undergoes an oxidative deamination to produce ammonia and the pyruvoyl group blocking the N-terminus of the alpha chain.

The enzyme catalyses S-adenosyl-L-methionine + H(+) = S-adenosyl 3-(methylsulfanyl)propylamine + CO2. The protein operates within amine and polyamine biosynthesis; S-adenosylmethioninamine biosynthesis; S-adenosylmethioninamine from S-adenosyl-L-methionine: step 1/1. In terms of biological role, catalyzes the decarboxylation of S-adenosylmethionine to S-adenosylmethioninamine (dcAdoMet), the propylamine donor required for the synthesis of the polyamines spermine and spermidine from the diamine putrescine. This is S-adenosylmethionine decarboxylase proenzyme from Sulfurihydrogenibium sp. (strain YO3AOP1).